The sequence spans 755 residues: Putative two-component response regulator-like APRR6 (755 aa).

One can recognise a Response regulatory domain in the interval 14 to 128 (SILLIDHDTA…DIKNMWQHVF (115 aa)).

Belongs to the ARR-like family.

The protein resides in the nucleus. The polypeptide is Putative two-component response regulator-like APRR6 (APRR6) (Arabidopsis thaliana (Mouse-ear cress)).